The chain runs to 2196 residues: Non-reducing polyketide synthase CTB1 (2196 aa).

The tract at residues 11 to 250 (AFGDQTYDCS…TRLPITAPYH (240 aa)) is N-terminal acylcarrier protein transacylase domain (SAT). The Ketosynthase family 3 (KS3) domain occupies 381–814 (KSPIAILAAS…GGNTCLVLED (434 aa)). Active-site for beta-ketoacyl synthase activity residues include C553, H688, and H733. The segment at 922–1223 (AFTGQGSAFA…QTFASINKDK (302 aa)) is malonyl-CoA:ACP transacylase (MAT) domain. Positions 1298–1611 (SSSIHKVITN…VPKRLMHYIV (314 aa)) are product template (PT) domain. An N-terminal hotdog fold region spans residues 1302-1441 (HKVITNTITA…EKTALKSAAL (140 aa)). The region spanning 1302–1608 (HKVITNTITA…LQGVPKRLMH (307 aa)) is the PKS/mFAS DH domain. The active-site Proton acceptor; for dehydratase activity is H1335. The segment at 1460–1608 (TYRFSKGMIY…LQGVPKRLMH (149 aa)) is C-terminal hotdog fold. D1520 serves as the catalytic Proton donor; for dehydratase activity. A disordered region spans residues 1617 to 1666 (KASGPPTEKKTSSPPVEKKASAPVAPTRPAIQRKNASIPPPATQVTPQNK). Residues 1623–1636 (TEKKTSSPPVEKKA) show a composition bias toward basic and acidic residues. 2 consecutive Carrier domains span residues 1671–1748 (PSVS…TRLS) and 1775–1857 (DPSP…SGST). Residues S1708 and S1816 each carry the O-(pantetheine 4'-phosphoryl)serine modification. Residues 1856–1867 (STESFDSTTTKP) are compositionally biased toward polar residues. A disordered region spans residues 1856–1923 (STESFDSTTT…PPKGRIPPAW (68 aa)). Residues 1872–1887 (ATPPLTDSSASSPPSS) show a composition bias toward low complexity. The interval 1937–2187 (ILFLFPDGAG…SGAQMLVEHM (251 aa)) is thioesterase (TE) domain.

The cofactor is pantetheine 4'-phosphate.

The catalysed reaction is 6 malonyl-CoA + acetyl-CoA + 6 H(+) = nor-toralactone + 6 CO2 + 7 CoA + 2 H2O. The protein operates within mycotoxin biosynthesis. Its function is as follows. Polyketide synthase; part of the gene cluster that mediates the biosynthesis of cercosporin, a light-activated, non-host-selective toxin. The perylenequinone chromophore of cercosporin absorbs light energy to attain an electronically-activated triplet state and produces active oxygen species such as the hydroxyl radical, superoxide, hydrogen peroxide or singlet oxygen upon reaction with oxygen molecules. These reactive oxygen species cause damage to various cellular components including lipids, proteins and nucleic acids. The first step of cercosporin biosynthesis is performed by the polyketide synthase CTB1 which catalyzes the formation of nor-toralactone. The starter unit acyltransferase (SAT) domain of CTB1 initiates polyketide extension by the selective utilization of acetyl-CoA, which is elongated to the heptaketide in the beta-ketoacyl synthase (KS) domain by successive condensations with six malonyl units introduced by the malonyl acyltransferase (MAT) domain. The product template (PT) domain catalyzes C4-C9 and C2-C11 aldol cyclizations and dehydrations to a trihydroxynaphthalene, which is thought to be delivered to the thioesterase (TE) domain for product release. The bifunctional enzyme CTB3 then methylates nor-toralactone to toralactone before conducting an unusual oxidative aromatic ring opening. The O-methyltransferase CTB2 further methylates the nascent OH-6 of the CBT3 product, blocking further oxidation at this site before the reductase CTB6 reduces the 2-oxopropyl ketone at position C7, giving naphthalene. The FAD-dependent monooxygenase CTB5 in concert with the multicopper oxidase CTB12 are responsible for homodimerization of naphthalene with CTB7 installing the dioxepine moiety, finally producing cercosporin. The fasciclin domain-containing protein CTB11 might act with CTB5 and CTB12 whereas the roles of CTB9 and CTB10 have still to be elucidated. This Cercospora nicotianae (Barn spot disease fungus) protein is Non-reducing polyketide synthase CTB1.